The sequence spans 167 residues: Ubiquitin-fold modifier-conjugating enzyme 1 (167 aa).

Residue Cys-116 is the Glycyl thioester intermediate of the active site. A Glycyl lysine isopeptide (Lys-Gly) (interchain with G-Cter in UFM1) cross-link involves residue Lys-122.

It belongs to the ubiquitin-conjugating enzyme family. UFC1 subfamily. Interacts with UBA5 (via C-terminus). Interacts with UFL1. Interacts with UFM1. Interacts with KIRREL3. In terms of processing, ufmylated at Lys-122. Deufmylated by UFSP1.

Its function is as follows. E2-like enzyme which specifically catalyzes the second step in ufmylation. Accepts the ubiquitin-like modifier UFM1 from the E1 enzyme UBA5 and forms an intermediate with UFM1 via a thioester linkage. Ufmylation is involved in various processes, such as ribosome recycling, response to DNA damage, interferon response or reticulophagy (also called ER-phagy). This is Ubiquitin-fold modifier-conjugating enzyme 1 from Bos taurus (Bovine).